Consider the following 349-residue polypeptide: Replication-associated protein (349 aa).

The CRESS-DNA virus Rep endonuclease domain maps to 9–117; sequence QIAAKNYFLT…DGDTIEWGEF (109 aa). Residues 16 to 19 carry the RCR-1 motif; the sequence is FLTY. The a divalent metal cation site is built by Glu-50, His-58, and His-60. The RCR-2 motif lies at 58–60; that stretch reads HLH. The active-site For DNA cleavage activity is Tyr-104. Residues 104–107 carry the RCR-3 motif; the sequence is YVDK. Residue Asp-108 participates in a divalent metal cation binding. The binding to RBR1 stretch occupies residues 144–154; the sequence is KEEALQIIKEK. An oligomerization region spans residues 157-177; it reads KDFLFCYHNLVSNLDRIFTPA. ATP is bound at residue 223–230; the sequence is GESRTGKT.

It belongs to the geminiviridae Rep protein family. As to quaternary structure, homooligomer. Interacts with the replication enhancer protein (REn). Interacts with host retinoblastoma-related protein 1 (RBR1), and may thereby induce the transcription of host replicative enzymes even if the cell is not dividing anymore. Interacts with host PCNA. Interacts with host SCE1 protein. It depends on Mg(2+) as a cofactor. Mn(2+) serves as cofactor.

It localises to the host nucleus. Essential for the replication of viral ssDNA. The closed circular ssDNA genome is first converted to a superhelical dsDNA. Rep binds a specific region at the genome origin of replication. It introduces an endonucleolytic nick within the conserved sequence 5'-TAATATTAC-3' in the intergenic region of the genome present in all geminiviruses, thereby initiating the rolling circle replication (RCR). Following cleavage, binds covalently to the 5'-phosphate of DNA as a tyrosyl ester. The cleavage gives rise to a free 3'-OH that serves as a primer for the cellular DNA polymerase. The polymerase synthesizes the (+) strand DNA by rolling circle mechanism. After one round of replication, a Rep-catalyzed nucleotidyl transfer reaction releases a circular single-stranded virus genome, thereby terminating the replication. Displays origin-specific DNA cleavage, nucleotidyl transferase, ATPase and helicase activities. This is Replication-associated protein from Solanum lycopersicum (Tomato).